Reading from the N-terminus, the 294-residue chain is N-acetylmuramic acid 6-phosphate etherase (294 aa).

Positions threonine 56–lysine 219 constitute an SIS domain. The active-site Proton donor is glutamate 84. Residue glutamate 115 is part of the active site.

The protein belongs to the GCKR-like family. MurNAc-6-P etherase subfamily. As to quaternary structure, homodimer.

The catalysed reaction is N-acetyl-D-muramate 6-phosphate + H2O = N-acetyl-D-glucosamine 6-phosphate + (R)-lactate. It functions in the pathway amino-sugar metabolism; 1,6-anhydro-N-acetylmuramate degradation. It participates in amino-sugar metabolism; N-acetylmuramate degradation. Its pathway is cell wall biogenesis; peptidoglycan recycling. Specifically catalyzes the cleavage of the D-lactyl ether substituent of MurNAc 6-phosphate, producing GlcNAc 6-phosphate and D-lactate. Together with AnmK, is also required for the utilization of anhydro-N-acetylmuramic acid (anhMurNAc) either imported from the medium or derived from its own cell wall murein, and thus plays a role in cell wall recycling. This chain is N-acetylmuramic acid 6-phosphate etherase, found in Francisella tularensis subsp. novicida (strain U112).